A 144-amino-acid polypeptide reads, in one-letter code: UPF0225 protein RSc0270 (144 aa).

Belongs to the UPF0225 family.

The polypeptide is UPF0225 protein RSc0270 (Ralstonia nicotianae (strain ATCC BAA-1114 / GMI1000) (Ralstonia solanacearum)).